Consider the following 319-residue polypeptide: Selection and upkeep of intraepithelial T-cells protein 9 (319 aa).

The N-terminal stretch at 1–26 (MESSASCLPGFFMSFLLLQNTVLTQA) is a signal peptide. Residues 27-117 (MRSDIKINIQ…TNQEKKRSIV (91 aa)) form the Ig-like V-type domain. Over 27 to 139 (MRSDIKINIQ…LMSNKFSCPS (113 aa)) the chain is Extracellular. A disulfide bond links Cys-47 and Cys-101. The N-linked (GlcNAc...) asparagine glycan is linked to Asn-105. A helical transmembrane segment spans residues 140 to 160 (IYLITIIFLNFLRGILVFCCL). Over 161-183 (RRKPVCFRNLMSTVMEALYSKMG) the chain is Cytoplasmic. Residues 184 to 204 (VCCLLIWECLLLVLYIAFLPI) form a helical membrane-spanning segment. Over 205 to 228 (YVSFRSRAFLLDDTYPLYTNWLWN) the chain is Extracellular. A helical transmembrane segment spans residues 229-249 (ICIILTVIMVLFPGLILCLLW). At 250–319 (TLNCYGQVSS…DDTASTLFIS (70 aa)) the chain is on the cytoplasmic side.

The protein belongs to the SKINT family. In terms of tissue distribution, expressed in skin, thymus and testis.

The protein localises to the membrane. Its function is as follows. May act by engaging a cell surface molecule on immature T-cells in the embryonic thymus. The sequence is that of Selection and upkeep of intraepithelial T-cells protein 9 (Skint9) from Mus musculus (Mouse).